Here is a 389-residue protein sequence, read N- to C-terminus: Aspartic protease 6 (389 aa).

Positions 1 to 15 (MKTFILLAVLGLASA) are cleaved as a signal peptide. The 314-residue stretch at 71 to 384 (YLGNITIGTP…DIGNKRMGFA (314 aa)) folds into the Peptidase A1 domain. A glycan (N-linked (GlcNAc...) asparagine) is linked at Asn74. The active site involves Asp89. Cys102 and Cys106 form a disulfide bridge. The active site involves Asp277. Residues Cys312 and Cys344 are joined by a disulfide bond.

It belongs to the peptidase A1 family. In terms of processing, glycosylated. Has phosphorylcholine-substituted oligosaccharide N-glycans. In terms of tissue distribution, expressed in intestine, muscles, pharynx and hypodermis.

The protein localises to the secreted. Its function is as follows. Aspartic protease. The polypeptide is Aspartic protease 6 (Caenorhabditis elegans).